The sequence spans 156 residues: RNA pyrophosphohydrolase (156 aa).

The Nudix hydrolase domain maps to 6–148; sequence NYRPNVAAIV…KKNIYVKVIK (143 aa). The short motif at 43-64 is the Nudix box element; the sequence is GGIDKGESVKNALFRELKEEIG.

Belongs to the Nudix hydrolase family. RppH subfamily. The cofactor is a divalent metal cation.

Accelerates the degradation of transcripts by removing pyrophosphate from the 5'-end of triphosphorylated RNA, leading to a more labile monophosphorylated state that can stimulate subsequent ribonuclease cleavage. In Campylobacter jejuni subsp. jejuni serotype O:6 (strain 81116 / NCTC 11828), this protein is RNA pyrophosphohydrolase.